Here is a 224-residue protein sequence, read N- to C-terminus: MKIGGIDEAGRGPAIGPLVVATVVVDEKNIEKLRNIGVKDSKQLTPHERKNLFSQITSIADDYKIVIVSPEEIDNRSGTMNELEVEKFALALNSLQIKPALIYADAADVDANRFASLIERRLNYKAKIIAEHKADAKYPVVSAASILAKVVRDEEIEKLKKQYGDFGSGYPSDPKTKKWLEEYYKKHNSFPPIVRRTWETVRKIEESIKAKKSQLTLDKFFKKP.

The RNase H type-2 domain maps to 1 to 210; that stretch reads MKIGGIDEAG…VRKIEESIKA (210 aa). 3 residues coordinate a divalent metal cation: aspartate 7, glutamate 8, and aspartate 105.

Belongs to the RNase HII family. It depends on Mn(2+) as a cofactor. The cofactor is Mg(2+).

It localises to the cytoplasm. It carries out the reaction Endonucleolytic cleavage to 5'-phosphomonoester.. In terms of biological role, endonuclease that specifically degrades the RNA of RNA-DNA hybrids. The chain is Ribonuclease HII from Pyrococcus furiosus (strain ATCC 43587 / DSM 3638 / JCM 8422 / Vc1).